The primary structure comprises 624 residues: Aeromonas extracellular serine protease (624 aa).

Residues 1–24 form the signal peptide; that stretch reads MKQTSLALAITALLSTLPSALVQA. C28 and C48 are disulfide-bonded. Ca(2+) is bound at residue N53. The Peptidase S8 domain maps to 59-421; it reads QWYLLNSGQD…GKVRDVKGLE (363 aa). The active-site Charge relay system is the D102. A Ca(2+)-binding site is contributed by D111. The segment at 116-140 is disordered; that stretch reads VRPGSKNVVTGSDDPTPTDPDTAHG. H139 acts as the Charge relay system in catalysis. Ca(2+) contacts are provided by V150, N152, I154, T156, D321, L322, G324, M327, N330, and C350. A disulfide bridge links C325 with C350. Residue S360 is the Charge relay system of the active site. The region spanning 456-622 is the P/Homo B domain; sequence LPPLVQLPWQ…SLRVLGHDAN (167 aa). The Ca(2+) site is built by D478, D512, D577, A579, N602, and N603.

The protein belongs to the peptidase S8 family. Furin subfamily. In terms of assembly, forms a complex with the chaperone ORF2 in the periplasm. After translocation of the ASP-ORF2 complex from the periplasm to the extracellular space, the complex is dissociated in a pH-dependent manner. Ca(2+) is required as a cofactor.

The protein resides in the periplasm. Its subcellular location is the secreted. It catalyses the reaction Cleavage of -Lys-Lys-|-Xaa and -Lys-Arg-|-Xaa bonds.. Its activity is regulated as follows. Folding, maturation and production of the active form of the protease by the cell requires a protein (ORF2), encoded just downstream of asp, which acts as a chaperone. Formation of a complex with ORF2 in the periplasm also inactivates the protease activity and likely protects ASP from intrinsic proteases. In vitro, protease activity is inhibited by human alpha-2-macroglobulin, suggesting that this inhibitor can impede ASP virulence activities in A.sobria infection sites. However, slow ASP inhibition by alpha-2-macroglobulin in plasma may indicate insufficient ASP control in vivo. Activity is inhibited by serine protease inhibitors such as 4-(2-aminoethyl)-benzenesulfonyl fluoride (AEBSF) and diisopropyl fluorophosphate (DFP). Not inhibited by metallo-protease inhibitors and cysteine protease inhibitors. The treatment with reagents to modify sulfhydryl group do not reduce the activity. Its function is as follows. Exhibits serine protease activity. Preferentially cleaves the peptide bond following two basic residues, one of which is Lys, but does not recognize the bond following a single basic residue. Probable potent virulence factor that cleaves various host plasma proteins, including prekallikrein, prothrombin and fibrinogen. ASP induces vascular leakage and reduction in blood pressure by activating the host plasma kallikrein/kinin system. It affects the host coagulation system during infection through activation of prothrombin to alpha-thrombin and degradation of fibrinogen, which impairs plasma clottability. It also hydrolyzes the complement component C5, releasing the C5a anaphylatoxin, which causes the formation of pus and edema. In addition, degrades its external chaperone ORF2 after the secretion of the ASP-ORF2 complex. This Aeromonas sobria protein is Aeromonas extracellular serine protease.